Reading from the N-terminus, the 87-residue chain is MSLLEFFRPQKKTSASLAKERLQIIVAERRSQNDPAPSYLPQLKEDILKVISKYVDIDPNMVDLTFEHKDDDISVLELNVKLPDDEK.

The protein belongs to the MinE family.

Functionally, prevents the cell division inhibition by proteins MinC and MinD at internal division sites while permitting inhibition at polar sites. This ensures cell division at the proper site by restricting the formation of a division septum at the midpoint of the long axis of the cell. The sequence is that of Cell division topological specificity factor from Vibrio parahaemolyticus serotype O3:K6 (strain RIMD 2210633).